Consider the following 190-residue polypeptide: Peptidyl-tRNA hydrolase (190 aa).

Tyr18 contacts tRNA. Catalysis depends on His23, which acts as the Proton acceptor. The tRNA site is built by Phe65, Asn67, and Asn113.

It belongs to the PTH family. As to quaternary structure, monomer.

It is found in the cytoplasm. It carries out the reaction an N-acyl-L-alpha-aminoacyl-tRNA + H2O = an N-acyl-L-amino acid + a tRNA + H(+). Hydrolyzes ribosome-free peptidyl-tRNAs (with 1 or more amino acids incorporated), which drop off the ribosome during protein synthesis, or as a result of ribosome stalling. Functionally, catalyzes the release of premature peptidyl moieties from peptidyl-tRNA molecules trapped in stalled 50S ribosomal subunits, and thus maintains levels of free tRNAs and 50S ribosomes. In Akkermansia muciniphila (strain ATCC BAA-835 / DSM 22959 / JCM 33894 / BCRC 81048 / CCUG 64013 / CIP 107961 / Muc), this protein is Peptidyl-tRNA hydrolase.